The following is a 311-amino-acid chain: tRNA dimethylallyltransferase (311 aa).

16 to 23 (GPTASGKS) lines the ATP pocket. Substrate is bound at residue 18-23 (TASGKS). The tract at residues 41–44 (DSMQ) is interaction with substrate tRNA.

Belongs to the IPP transferase family. In terms of assembly, monomer. Mg(2+) serves as cofactor.

The catalysed reaction is adenosine(37) in tRNA + dimethylallyl diphosphate = N(6)-dimethylallyladenosine(37) in tRNA + diphosphate. Catalyzes the transfer of a dimethylallyl group onto the adenine at position 37 in tRNAs that read codons beginning with uridine, leading to the formation of N6-(dimethylallyl)adenosine (i(6)A). This Geobacter sulfurreducens (strain ATCC 51573 / DSM 12127 / PCA) protein is tRNA dimethylallyltransferase.